Here is a 394-residue protein sequence, read N- to C-terminus: ATP phosphoribosyltransferase regulatory subunit (394 aa).

It belongs to the class-II aminoacyl-tRNA synthetase family. HisZ subfamily. As to quaternary structure, heteromultimer composed of HisG and HisZ subunits.

Its subcellular location is the cytoplasm. It functions in the pathway amino-acid biosynthesis; L-histidine biosynthesis; L-histidine from 5-phospho-alpha-D-ribose 1-diphosphate: step 1/9. Required for the first step of histidine biosynthesis. May allow the feedback regulation of ATP phosphoribosyltransferase activity by histidine. This Teredinibacter turnerae (strain ATCC 39867 / T7901) protein is ATP phosphoribosyltransferase regulatory subunit.